The sequence spans 63 residues: Cytochrome c oxidase subunit 5C (63 aa).

Residues 16–34 (VVKEIFIGLTLGLVAGGMW) form a helical membrane-spanning segment.

Belongs to the cytochrome c oxidase subunit 5C family.

The protein localises to the mitochondrion inner membrane. Its function is as follows. This protein is one of the nuclear-coded polypeptide chains of cytochrome c oxidase, the terminal oxidase in mitochondrial electron transport. In Hordeum vulgare (Barley), this protein is Cytochrome c oxidase subunit 5C (COX5C).